A 289-amino-acid polypeptide reads, in one-letter code: Tachykinins (289 aa).

Positions 1–24 (MRSQGGSFAVALLLLLLLTAAATA) are cleaved as a signal peptide. A propeptide spanning residues 25-49 (ADAEPDVESSVSTLPPGADAPRRMV) is cleaved from the precursor. The tract at residues 28–80 (EPDVESSVSTLPPGADAPRRMVKRAPTSSFIGMRGKKEDEKDQRAADWMGPDP) is disordered. Arg-61 bears the Arginine amide mark. Positions 62-72 (GKKEDEKDQRA) are enriched in basic and acidic residues. Asn-95 carries the post-translational modification Asparagine amide. Arg-110 bears the Arginine amide mark. Val-155 bears the Valine amide mark. Residues 156–175 (GKRAPTGFTGMRGKRPMSGD) are disordered. An arginine amide mark is found at Arg-167, Arg-198, Arg-237, and Arg-281. A propeptide spanning residues 285-289 (PALAE) is cleaved from the precursor.

This sequence belongs to the tachykinin family.

Its subcellular location is the secreted. In terms of biological role, tachykinins are active peptides which excite neurons, evoke behavioral responses, are potent vasodilators and secretagogues, and contract (directly or indirectly) many smooth muscles. Stimulates gut muscle contractions. The chain is Tachykinins from Drosophila pseudoobscura pseudoobscura (Fruit fly).